Reading from the N-terminus, the 120-residue chain is NAD(P)H-quinone oxidoreductase subunit 3 (120 aa).

3 helical membrane passes run 6–26 (GYEYFLGFLLISGAVPILALT), 64–84 (MFALVFVIFDVETVFLYPWAV), and 89–109 (LGLLAFIEALVFITILVVALA).

The protein belongs to the complex I subunit 3 family. As to quaternary structure, NDH-1 can be composed of about 15 different subunits; different subcomplexes with different compositions have been identified which probably have different functions.

It is found in the cellular thylakoid membrane. The catalysed reaction is a plastoquinone + NADH + (n+1) H(+)(in) = a plastoquinol + NAD(+) + n H(+)(out). It carries out the reaction a plastoquinone + NADPH + (n+1) H(+)(in) = a plastoquinol + NADP(+) + n H(+)(out). NDH-1 shuttles electrons from an unknown electron donor, via FMN and iron-sulfur (Fe-S) centers, to quinones in the respiratory and/or the photosynthetic chain. The immediate electron acceptor for the enzyme in this species is believed to be plastoquinone. Couples the redox reaction to proton translocation, and thus conserves the redox energy in a proton gradient. Cyanobacterial NDH-1 also plays a role in inorganic carbon-concentration. The chain is NAD(P)H-quinone oxidoreductase subunit 3 from Prochlorococcus marinus (strain NATL1A).